Reading from the N-terminus, the 85-residue chain is UPF0291 protein SpyM3_1470 (85 aa).

The tract at residues 62-85 (TPEKLRQVQREKGLHGRSLDDPKS) is disordered.

Belongs to the UPF0291 family.

The protein localises to the cytoplasm. The polypeptide is UPF0291 protein SpyM3_1470 (Streptococcus pyogenes serotype M3 (strain ATCC BAA-595 / MGAS315)).